The chain runs to 745 residues: Serine/threonine-protein kinase BUR1 (745 aa).

A disordered region spans residues 1–21 (MSVIAGHHVPRSNDQRQYDTP). A Protein kinase domain is found at 44–349 (YEVIEKLGQG…ALDALNHKFF (306 aa)). ATP is bound by residues 50–58 (LGQGTFGVV) and K73. D179 acts as the Proton acceptor in catalysis. Composition is skewed to basic and acidic residues over residues 380–406 (DKEQ…RYNA), 428–475 (DYID…DIQN), and 493–508 (KLRE…KKYD). Residues 380-701 (DKEQAVSELK…EVSDLEEDSD (322 aa)) are disordered. Residues 516–534 (SRGSKSPSPSKLSSISQSK) show a composition bias toward low complexity. The segment covering 547–557 (ASRESSLERKQ) has biased composition (basic and acidic residues). 2 stretches are compositionally biased toward polar residues: residues 558–567 (VSNGIRTTTD) and 586–598 (LTSN…PTRN). Over residues 599–631 (KSVERPKDLEKPTNGVTEDRNKKPVLEEKKEVV) the composition is skewed to basic and acidic residues. A compositionally biased stretch (low complexity) spans 632–660 (KPNLAIPKIKKSSSLVSLSSRSSTTPVIS). Polar residues predominate over residues 661 to 674 (NPSKVTKRAASSVT). Residues 692–701 (EVSDLEEDSD) show a composition bias toward acidic residues.

It belongs to the protein kinase superfamily. CMGC Ser/Thr protein kinase family. CDC2/CDKX subfamily.

It localises to the nucleus. It catalyses the reaction L-seryl-[protein] + ATP = O-phospho-L-seryl-[protein] + ADP + H(+). The enzyme catalyses L-threonyl-[protein] + ATP = O-phospho-L-threonyl-[protein] + ADP + H(+). The catalysed reaction is [DNA-directed RNA polymerase] + ATP = phospho-[DNA-directed RNA polymerase] + ADP + H(+). Functionally, serine/threonine-protein kinase involved in transcription regulation. Phosphorylates the UBC2/RAD6 ubiquitin-conjugating enzyme (E2), leading to monoubiquitination of histone H2B and the silencing of telomeric-associated genes. Also required for histone H3 methylation. Necessary for the recovery from pheromone-induced growth arrest in the cell cycle G1 phase. Required for pseudohyphal growth and virulence in mice. In Candida albicans (strain SC5314 / ATCC MYA-2876) (Yeast), this protein is Serine/threonine-protein kinase BUR1 (CRK1).